The chain runs to 84 residues: Sulfur carrier protein TusA (84 aa).

The Cysteine persulfide intermediate role is filled by Cys-19.

It belongs to the sulfur carrier protein TusA family. Interacts with IscS.

The protein resides in the cytoplasm. It functions in the pathway tRNA modification. Its function is as follows. Sulfur carrier protein involved in sulfur trafficking in the cell. Part of a sulfur-relay system required for 2-thiolation during synthesis of 2-thiouridine of the modified wobble base 5-methylaminomethyl-2-thiouridine (mnm(5)s(2)U) in tRNA. Interacts with IscS and stimulates its cysteine desulfurase activity. Accepts an activated sulfur from IscS, which is then transferred to TusD, and thus determines the direction of sulfur flow from IscS to 2-thiouridine formation. Also appears to be involved in sulfur transfer for the biosynthesis of molybdopterin. The protein is Sulfur carrier protein TusA of Sodalis glossinidius (strain morsitans).